Reading from the N-terminus, the 243-residue chain is MSEMIYGIHAVQALLERAPERFQEAFILKGREDKRLLPLIHALESQGVVIQLANRQYLDEKSDGAVHQGIIARVKPGRQYQENDLPDLIALHDRPFLLILDGVTDPHNLGACLRSADAAGVHAVIVPKDRSAQLNATAKKVACGAAESVPLIRVTNLARTMRMLQEENIWIVGTAGEADHTLYQSKMPGRMALVMGAEGEGMRRLTREHCDELISIPMAGSVSSLNVSVATGICLFEAVRQRT.

Residues glycine 196, isoleucine 216, and leucine 225 each contribute to the S-adenosyl-L-methionine site.

The protein belongs to the class IV-like SAM-binding methyltransferase superfamily. RNA methyltransferase TrmH family. RlmB subfamily. Homodimer.

It is found in the cytoplasm. The catalysed reaction is guanosine(2251) in 23S rRNA + S-adenosyl-L-methionine = 2'-O-methylguanosine(2251) in 23S rRNA + S-adenosyl-L-homocysteine + H(+). Its function is as follows. Specifically methylates the ribose of guanosine 2251 in 23S rRNA. This is 23S rRNA (guanosine-2'-O-)-methyltransferase RlmB from Salmonella typhi.